We begin with the raw amino-acid sequence, 479 residues long: tRNA modification GTPase MnmE (479 aa).

Arg25, Glu82, and Lys134 together coordinate (6S)-5-formyl-5,6,7,8-tetrahydrofolate. The TrmE-type G domain occupies 230–401 (GLRVVIAGQP…LRAALLARAG (172 aa)). Asn240 serves as a coordination point for K(+). GTP-binding positions include 240–245 (NAGKSS), 259–265 (TPIPGTT), 284–287 (DTAG), 352–355 (NKAD), and 382–384 (SAR). Position 244 (Ser244) interacts with Mg(2+). The K(+) site is built by Thr259, Ile261, and Thr264. Thr265 contributes to the Mg(2+) binding site. Lys479 provides a ligand contact to (6S)-5-formyl-5,6,7,8-tetrahydrofolate.

It belongs to the TRAFAC class TrmE-Era-EngA-EngB-Septin-like GTPase superfamily. TrmE GTPase family. Homodimer. Heterotetramer of two MnmE and two MnmG subunits. It depends on K(+) as a cofactor.

It is found in the cytoplasm. Exhibits a very high intrinsic GTPase hydrolysis rate. Involved in the addition of a carboxymethylaminomethyl (cmnm) group at the wobble position (U34) of certain tRNAs, forming tRNA-cmnm(5)s(2)U34. This Leptothrix cholodnii (strain ATCC 51168 / LMG 8142 / SP-6) (Leptothrix discophora (strain SP-6)) protein is tRNA modification GTPase MnmE.